The sequence spans 413 residues: Serine/threonine transporter SstT (413 aa).

9 consecutive transmembrane segments (helical) span residues 15–35 (NIVIQILIGIIAGVALATLAP), 48–68 (FVSALKAVAPILVFILVAASI), 82–102 (VIVLYLVGTFCASLTAVVMSF), 141–161 (ALMTGNFIGILGWAVALGLGL), 178–198 (CISAIVTVVIRFAPIGIFGLV), 216–236 (LLAVLLGSMAFIALIVNPLIV), 290–310 (IPLGATINMAGAAITITVLTL), 330–350 (LVAAVSACGASGVAGGSLLLI), and 357–377 (FGISNDIAMQVVAIGFIIGVV).

The protein belongs to the dicarboxylate/amino acid:cation symporter (DAACS) (TC 2.A.23) family.

Its subcellular location is the cell inner membrane. It catalyses the reaction L-serine(in) + Na(+)(in) = L-serine(out) + Na(+)(out). It carries out the reaction L-threonine(in) + Na(+)(in) = L-threonine(out) + Na(+)(out). Functionally, involved in the import of serine and threonine into the cell, with the concomitant import of sodium (symport system). This chain is Serine/threonine transporter SstT, found in Aliivibrio fischeri (strain ATCC 700601 / ES114) (Vibrio fischeri).